The chain runs to 213 residues: Phycocyanobilin lyase subunit beta (213 aa).

It belongs to the CpcE/RpcE/PecE family. CpcE and CpcF associate to form a lyase.

In terms of biological role, required for the chromophorylation of the CpcA gene product. The protein is Phycocyanobilin lyase subunit beta (cpcF) of Thermosynechococcus vestitus (strain NIES-2133 / IAM M-273 / BP-1).